The chain runs to 766 residues: 5-methyltetrahydropteroyltriglutamate--homocysteine methyltransferase (766 aa).

Residues 16–19 (RELK) and lysine 117 each bind 5-methyltetrahydropteroyltri-L-glutamate. L-homocysteine is bound by residues 442 to 444 (IGS) and glutamate 495. L-methionine-binding positions include 442–444 (IGS) and glutamate 495. 5-methyltetrahydropteroyltri-L-glutamate contacts are provided by residues 526–527 (RC) and tryptophan 572. Residue aspartate 610 participates in L-homocysteine binding. Aspartate 610 is an L-methionine binding site. 5-methyltetrahydropteroyltri-L-glutamate is bound at residue glutamate 616. Residues histidine 652, cysteine 654, and glutamate 676 each contribute to the Zn(2+) site. Histidine 705 (proton donor) is an active-site residue. Residue cysteine 737 participates in Zn(2+) binding.

This sequence belongs to the vitamin-B12 independent methionine synthase family. Zn(2+) serves as cofactor.

It carries out the reaction 5-methyltetrahydropteroyltri-L-glutamate + L-homocysteine = tetrahydropteroyltri-L-glutamate + L-methionine. The protein operates within amino-acid biosynthesis; L-methionine biosynthesis via de novo pathway; L-methionine from L-homocysteine (MetE route): step 1/1. Catalyzes the transfer of a methyl group from 5-methyltetrahydrofolate to homocysteine resulting in methionine formation. The protein is 5-methyltetrahydropteroyltriglutamate--homocysteine methyltransferase of Bordetella avium (strain 197N).